The chain runs to 440 residues: UDP-N-acetylmuramoylalanine--D-glutamate ligase (440 aa).

Residue 115–121 (GSNGKST) coordinates ATP.

It belongs to the MurCDEF family.

The protein localises to the cytoplasm. The enzyme catalyses UDP-N-acetyl-alpha-D-muramoyl-L-alanine + D-glutamate + ATP = UDP-N-acetyl-alpha-D-muramoyl-L-alanyl-D-glutamate + ADP + phosphate + H(+). It functions in the pathway cell wall biogenesis; peptidoglycan biosynthesis. In terms of biological role, cell wall formation. Catalyzes the addition of glutamate to the nucleotide precursor UDP-N-acetylmuramoyl-L-alanine (UMA). The polypeptide is UDP-N-acetylmuramoylalanine--D-glutamate ligase (Aliivibrio fischeri (strain ATCC 700601 / ES114) (Vibrio fischeri)).